Reading from the N-terminus, the 149-residue chain is Transcriptional repressor NrdR (149 aa).

The segment at 3–34 (CPFCSIQETKVIDSRLVADGHQVRRRRECTMC) is a zinc-finger region. One can recognise an ATP-cone domain in the interval 49-139 (PRVVKRDGSR…VYRSFEDIRE (91 aa)).

The protein belongs to the NrdR family. Zn(2+) is required as a cofactor.

In terms of biological role, negatively regulates transcription of bacterial ribonucleotide reductase nrd genes and operons by binding to NrdR-boxes. This Pseudoalteromonas atlantica (strain T6c / ATCC BAA-1087) protein is Transcriptional repressor NrdR.